A 209-amino-acid polypeptide reads, in one-letter code: Peroxiredoxin (209 aa).

The Thioredoxin domain maps to 2–156 (PLIGDKFPEM…IVRMIRAFRV (155 aa)). Cys-44 (cysteine sulfenic acid (-SOH) intermediate) is an active-site residue. Arg-119 provides a ligand contact to substrate. Cys-198 and Cys-204 are disulfide-bonded.

This sequence belongs to the peroxiredoxin family. Prx6 subfamily. Homodecamer. Pentamer of dimers that assemble into a ring structure.

It localises to the cytoplasm. It catalyses the reaction a hydroperoxide + [thioredoxin]-dithiol = an alcohol + [thioredoxin]-disulfide + H2O. Its function is as follows. Thiol-specific peroxidase that catalyzes the reduction of hydrogen peroxide and organic hydroperoxides to water and alcohols, respectively. Plays a role in cell protection against oxidative stress by detoxifying peroxides. This is Peroxiredoxin from Methanothermobacter thermautotrophicus (strain ATCC 29096 / DSM 1053 / JCM 10044 / NBRC 100330 / Delta H) (Methanobacterium thermoautotrophicum).